Reading from the N-terminus, the 854-residue chain is Probable disease resistance protein At1g51480 (854 aa).

The stretch at 25 to 62 (RNYIHKMEANLDDLHTTMEELKNGRDDLLRRVSIEEDK) forms a coiled coil. One can recognise an NB-ARC domain in the interval 138–441 (AHKIPVPKVE…CEGYINPNRY (304 aa)). Residue 180 to 187 (GMGGVGKT) participates in ATP binding. LRR repeat units follow at residues 514-535 (IVRQ…SKCS), 536-557 (NLST…FFLF), 560-582 (KLVV…ISNL), 584-605 (SLQY…MKKL), 607-629 (KLIY…SATL), and 631-652 (NLQV…MEEL).

It belongs to the disease resistance NB-LRR family.

In terms of biological role, probable disease resistance protein. This is Probable disease resistance protein At1g51480 from Arabidopsis thaliana (Mouse-ear cress).